The primary structure comprises 786 residues: Cyclin-F (786 aa).

The short motif at 20–28 (KRRIRRRPR) is the Nuclear localization signal 1 element. Residues 29–76 (NLTILSLPEDVLFHILKWLSVEDILAVRAVHSQLKDLVDNHASVWACA) form the F-box domain. The Cyclin N-terminal domain occupies 288–405 (QASQAVSKQQ…EIVSALEGKI (118 aa)). 4 short sequence motifs (d box) span residues 310 to 313 (RYIL), 343 to 346 (RRRL), 349 to 352 (RYRL), and 351 to 354 (RLQL). 2 disordered regions span residues 564–593 (SPSG…TAEL) and 675–738 (TQIP…HTQP). Positions 568 to 574 (RRTKRKR) match the Nuclear localization signal 2 motif. The PEST stretch occupies residues 582-766 (RGSFVTTPTA…ESSVPQQQVK (185 aa)). The segment covering 697 to 714 (VTTSGYSSVSTASPTSSV) has biased composition (low complexity). Residues 723–738 (QPTSVLSLDSDSHTQP) show a composition bias toward polar residues. A D box 5 motif is present at residues 767–770 (RINL).

It belongs to the cyclin family. Cyclin AB subfamily. In terms of assembly, component of the SCF(CCNF) complex consisting of CUL1, RBX1, SKP1 and CCNF. Interacts with SKP1. Interacts with CUL1. Interacts with CCNB1; interaction is required for nuclear localization of CCNB1. Interacts with CCP110; this interaction leads to CCP110 ubiquitination and degradation via the proteasome pathway. Interacts (via the Cyclin N-terminal domain) with MYBL2/BMYB. Interacts with FZR1/CDH1 (via N-terminus). Interacts with RRM2 (via Cy motif and when phosphorylated at 'Thr-33'); the interaction occurs exclusively in G2 and early M. Interacts with CDC6 (via Cy motif); the interaction takes place during G2 and M phase. Post-translationally, degraded when the spindle assembly checkpoint is activated during the G2-M transition. Degradation depends on the C-terminal PEST sequence. Phosphorylated just before cells enter into mitosis. In terms of processing, ubiquitinated by the anaphase-promoting complex (APC/C); leading to its degradation by the proteasome. In terms of tissue distribution, widely expressed, with expression detected in the heart, brain, placenta, lung, liver, skeletal muscle, kidney and pancreas.

It localises to the nucleus. It is found in the cytoplasm. The protein localises to the perinuclear region. Its subcellular location is the cytoskeleton. The protein resides in the microtubule organizing center. It localises to the centrosome. It is found in the centriole. Functionally, substrate recognition component of a SCF (SKP1-CUL1-F-box protein) E3 ubiquitin-protein ligase complex which mediates the ubiquitination and subsequent proteasomal degradation of target proteins. The SCF(CCNF) E3 ubiquitin-protein ligase complex is an integral component of the ubiquitin proteasome system (UPS) and links proteasome degradation to the cell cycle. Mediates the substrate recognition and the proteasomal degradation of various target proteins involved in the regulation of cell cycle progression and in the maintenance of genome stability. Mediates the ubiquitination and proteasomal degradation of CP110 during G2 phase, thereby acting as an inhibitor of centrosome reduplication. In G2, mediates the ubiquitination and subsequent degradation of ribonucleotide reductase RRM2, thereby maintaining a balanced pool of dNTPs and genome integrity. In G2, mediates the ubiquitination and proteasomal degradation of CDC6, thereby suppressing DNA re-replication and preventing genome instability. Involved in the ubiquitination and degradation of the substrate adapter CDH1 of the anaphase-promoting complex (APC/C), thereby acting as an antagonist of APC/C in regulating G1 progression and S phase entry. May play a role in the G2 cell cycle checkpoint control after DNA damage, possibly by promoting the ubiquitination of MYBL2/BMYB. The protein is Cyclin-F (CCNF) of Homo sapiens (Human).